We begin with the raw amino-acid sequence, 397 residues long: Protein RecA (397 aa).

The disordered stretch occupies residues 1–23; sequence MALETKPAKDPAAEDKHELDPKR. 83–90 is a binding site for ATP; sequence GPESSGKT.

The protein belongs to the RecA family.

The protein resides in the cytoplasm. Functionally, can catalyze the hydrolysis of ATP in the presence of single-stranded DNA, the ATP-dependent uptake of single-stranded DNA by duplex DNA, and the ATP-dependent hybridization of homologous single-stranded DNAs. It interacts with LexA causing its activation and leading to its autocatalytic cleavage. This chain is Protein RecA, found in Bifidobacterium longum (strain NCC 2705).